The sequence spans 726 residues: MSTTDDTHNTLSTGKCPFHQGGHDRSAGAGTASRDWWPNQLRVDLLNQHSNRSNPLGEDFDYRKEFSKLDYSALKGDLKALLTDSQPWWPADWGSYVGLFIRMAWHGAGTYRSIDGRGGAGRGQQRFAPLNSWPDNVSLDKARRLLWPIKQKYGQKISWADLFILAGNVALENSGFRTFGFGAGREDVWEPDLDVNWGDEKAWLTHRHPEALAKAPLGATEMGLIYVNPEGPDHSGEPLSAAAAIRATFGNMGMNDEETVALIAGGHTLGKTHGAAAASHVGADPEAAPIEAQGLGWASSYGSGVGADAITSGLEVVWTQTPTQWSNYFFENLFKYEWVQTRSPAGAIQFEAVDAPDIIPDPFDPSKKRKPTMLVTDLTLRFDPEFEKISRRFLNDPQAFNEAFARAWFKLTHRDMGPKARYIGPEVPKEDLIWQDPLPQPLYQPTQEDIINLKAAIAASGLSISEMVSVAWASASTFRGGDKRGGANGARLALAPQRDWEVNAVAARVLPVLEALQKTTNKASLADIIVLAGVVGIEQAAAAAGVSISVPFAPGRVDARQDQTDIEMFSLLEPIADGFRNYRARLDVSTTESLLIDKAQQLTLTAPEMTVLVGGMRVLGTNFDGSQNGVFTDRPGVLSTDFFANLLDMRYEWKPTDESNELFEGRDRLTGEVKYTATRADLVFGSNSVLRALAEVYACSDAHEKFVKDFVAAWVKVMNLDRFDLQ.

Residues Met1–Ser33 form a disordered region. Residues Trp105–Tyr226 constitute a cross-link (tryptophyl-tyrosyl-methioninium (Trp-Tyr) (with M-252)). His106 serves as the catalytic Proton acceptor. A cross-link (tryptophyl-tyrosyl-methioninium (Tyr-Met) (with W-105)) is located at residues Tyr226–Met252. His267 lines the heme b pocket.

The protein belongs to the peroxidase family. Peroxidase/catalase subfamily. In terms of assembly, homodimer or homotetramer. Requires heme b as cofactor. Post-translationally, formation of the three residue Trp-Tyr-Met cross-link is important for the catalase, but not the peroxidase activity of the enzyme.

It carries out the reaction H2O2 + AH2 = A + 2 H2O. It catalyses the reaction 2 H2O2 = O2 + 2 H2O. Its function is as follows. Bifunctional enzyme with both catalase and broad-spectrum peroxidase activity. The protein is Catalase-peroxidase of Salmonella choleraesuis (strain SC-B67).